The following is a 312-amino-acid chain: Olfactory receptor 7G3 (312 aa).

Over 1–25 the chain is Extracellular; that stretch reads MKAGNFSDTPEFFLLGLSGDPELQP. N5 is a glycosylation site (N-linked (GlcNAc...) asparagine). The helical transmembrane segment at 26–46 threads the bilayer; sequence ILFMLFLSMYLATMLGNLLII. Residues 47–54 lie on the Cytoplasmic side of the membrane; it reads LAVNSDSH. The helical transmembrane segment at 55-75 threads the bilayer; it reads LHTPMYFLLSILSLVDICFTS. The Extracellular segment spans residues 76 to 99; it reads TTMPKMLVNIQAQAQSINYTGCLT. N93 carries an N-linked (GlcNAc...) asparagine glycan. C97 and C189 are oxidised to a cystine. The chain crosses the membrane as a helical span at residues 100–120; that stretch reads QICFVLVFVGLENGILVMMAY. At 121–139 the chain is on the cytoplasmic side; it reads DRFVAICHPLRYNVIMNPK. A helical membrane pass occupies residues 140–160; that stretch reads LCGLLLLLSFIVSVLDALLHT. The Extracellular segment spans residues 161 to 197; that stretch reads LMVLQLTFCIDLEIPHFFCELAHILKLACSDVLINNI. The chain crosses the membrane as a helical span at residues 198-217; it reads LVYLVTSLLGVVPLSGIIFS. The Cytoplasmic segment spans residues 218–237; the sequence is YTRIVSSVMKIPSAGGKYKA. The helical transmembrane segment at 238-258 threads the bilayer; sequence FSICGSHLIVVSLFYGTGFGV. Topologically, residues 259 to 271 are extracellular; it reads YLSSGATHSSRKG. The chain crosses the membrane as a helical span at residues 272–292; the sequence is AIASVMYTVVTPMLNPLIYSL. The Cytoplasmic segment spans residues 293-312; the sequence is RNKDMLKALRKLISRIPSFH.

This sequence belongs to the G-protein coupled receptor 1 family.

The protein resides in the cell membrane. Its function is as follows. Odorant receptor. The protein is Olfactory receptor 7G3 (OR7G3) of Homo sapiens (Human).